The sequence spans 510 residues: Ent-sandaracopimaradiene 3-hydroxylase (510 aa).

Residues 4–24 (MLVAGAGAAAVAAVGGLVAAA) traverse the membrane as a helical segment. Heme is bound at residue C454.

This sequence belongs to the cytochrome P450 family. As to quaternary structure, interacts with the rice dwarf virus (RDV) P2 protein. Heme is required as a cofactor. As to expression, expressed in leaf blades and sheaths, stems and panicles.

It is found in the membrane. The enzyme catalyses ent-sandaracopimara-8(14),15-diene + reduced [NADPH--hemoprotein reductase] + O2 = ent-sandaracopimaradien-3beta-ol + oxidized [NADPH--hemoprotein reductase] + H2O + H(+). It carries out the reaction 9beta-pimara-7,15-diene + reduced [NADPH--hemoprotein reductase] + O2 = 9beta-pimara-7,15-diene-3beta-ol + oxidized [NADPH--hemoprotein reductase] + H2O + H(+). Its function is as follows. Catalyzes the hydroxylation of ent-sandaracopimaradiene at the C3alpha position to produce ent-3beta-hydroxy-sandaracopimaradiene, an intermediates for the biosynthesis of oryzalexin D and oryzalexin E phytoalexins. Catalyzes the hydroxylation of ent-cassadiene at the C3alpha position to produce 3alpha-hydroxy-ent-cassadiene, which may be an intermediate for the biosynthesis of phytocassane phytoalexins. Catalyzes the hydroxylation of syn-pimaradiene (9-beta-pimara-7,15-diene) at the C3beta position to produce 3-beta-syn-pimaradiene. Can hydroxylate ent-kaurene in vitro, but the product is not ent-kauren-19-ol as expected for ent-kaurene oxidase activity. The protein is Ent-sandaracopimaradiene 3-hydroxylase of Oryza sativa subsp. japonica (Rice).